A 429-amino-acid polypeptide reads, in one-letter code: Serine hydroxymethyltransferase (429 aa).

Residues leucine 133 and 137–139 (GHL) contribute to the (6S)-5,6,7,8-tetrahydrofolate site. Lysine 243 carries the post-translational modification N6-(pyridoxal phosphate)lysine. (6S)-5,6,7,8-tetrahydrofolate is bound at residue glutamate 259.

Belongs to the SHMT family. As to quaternary structure, homodimer. The cofactor is pyridoxal 5'-phosphate.

Its subcellular location is the cytoplasm. It catalyses the reaction (6R)-5,10-methylene-5,6,7,8-tetrahydrofolate + glycine + H2O = (6S)-5,6,7,8-tetrahydrofolate + L-serine. The protein operates within one-carbon metabolism; tetrahydrofolate interconversion. It functions in the pathway amino-acid biosynthesis; glycine biosynthesis; glycine from L-serine: step 1/1. Its function is as follows. Catalyzes the reversible interconversion of serine and glycine with tetrahydrofolate (THF) serving as the one-carbon carrier. This reaction serves as the major source of one-carbon groups required for the biosynthesis of purines, thymidylate, methionine, and other important biomolecules. Also exhibits THF-independent aldolase activity toward beta-hydroxyamino acids, producing glycine and aldehydes, via a retro-aldol mechanism. In Aster yellows witches'-broom phytoplasma (strain AYWB), this protein is Serine hydroxymethyltransferase.